We begin with the raw amino-acid sequence, 426 residues long: Adenylosuccinate synthetase (426 aa).

Residues 12 to 18 (GDEGKGK) and 40 to 42 (GHT) each bind GTP. The Proton acceptor role is filled by aspartate 13. Mg(2+)-binding residues include aspartate 13 and glycine 40. IMP is bound by residues 13–16 (DEGK), 38–41 (NAGH), threonine 125, arginine 139, glutamine 221, threonine 236, and arginine 300. Histidine 41 functions as the Proton donor in the catalytic mechanism. 296–302 (TTTGRPR) contributes to the substrate binding site. GTP is bound by residues arginine 302, 328-330 (KLD), and 410-412 (AVG).

The protein belongs to the adenylosuccinate synthetase family. Homodimer. It depends on Mg(2+) as a cofactor.

The protein localises to the cytoplasm. The enzyme catalyses IMP + L-aspartate + GTP = N(6)-(1,2-dicarboxyethyl)-AMP + GDP + phosphate + 2 H(+). It participates in purine metabolism; AMP biosynthesis via de novo pathway; AMP from IMP: step 1/2. In terms of biological role, plays an important role in the de novo pathway of purine nucleotide biosynthesis. Catalyzes the first committed step in the biosynthesis of AMP from IMP. The sequence is that of Adenylosuccinate synthetase from Syntrophomonas wolfei subsp. wolfei (strain DSM 2245B / Goettingen).